The following is a 509-amino-acid chain: MAAAAGMLLLGLLQAGGSVLGQAMEKVTGGNLLSMLLIACAFTLSLVYLIRLAAGHLVQLPAGVKSPPYIFSPIPFLGHAIAFGKSPIEFLENAYEKYGPVFSFTMVGKTFTYLLGSDAAALLFNSKNEDLNAEDVYSRLTTPVFGKGVAYDVPNPVFLEQKKMLKSGLNIAHFKQHVSIIEKETKEYFESWGESGEKNVFEALSELIILTASHCLHGKEIRSQLNEKVAQLYADLDGGFSHAAWLLPGWLPLPSFRRRDRAHREIKDIFYKAIQKRRQSQEKIDDILQTLLDATYKDGRPLTDDEVAGMLIGLLLAGQHTSSTTSAWMGFFLARDKTLQKKCYLEQKTVCGENLPPLTYDQLKDLNLLDRCIKETLRLRPPIMIMMRMARTPQTVAGYTIPPGHQVCVSPTVNQRLKDSWVERLDFNPDRYLQDNPASGEKFAYVPFGAGRHRCIGENFAYVQIKTIWSTMLRLYEFDLIDGYFPTVNYTTMIHTPENPVIRYKRRSK.

The helical transmembrane segment at 30–50 (GNLLSMLLIACAFTLSLVYLI) threads the bilayer. Residue Cys-455 coordinates heme.

The protein belongs to the cytochrome P450 family. Heme serves as cofactor. Ubiquitinated by MARCHF6, leading to proteasomal degradation. Ubiquitously expressed with highest levels in testis, ovary, adrenal, prostate, liver, kidney and lung.

It is found in the endoplasmic reticulum membrane. The protein resides in the microsome membrane. The enzyme catalyses a 14alpha-methyl steroid + 3 reduced [NADPH--hemoprotein reductase] + 3 O2 = a Delta(14) steroid + formate + 3 oxidized [NADPH--hemoprotein reductase] + 4 H2O + 4 H(+). It catalyses the reaction lanosterol + 3 reduced [NADPH--hemoprotein reductase] + 3 O2 = 4,4-dimethyl-5alpha-cholesta-8,14,24-trien-3beta-ol + formate + 3 oxidized [NADPH--hemoprotein reductase] + 4 H2O + 4 H(+). The catalysed reaction is 24,25-dihydrolanosterol + 3 reduced [NADPH--hemoprotein reductase] + 3 O2 = 4,4-dimethyl-8,14-cholestadien-3beta-ol + formate + 3 oxidized [NADPH--hemoprotein reductase] + 4 H2O + 4 H(+). It carries out the reaction a 14alpha-methyl steroid + reduced [NADPH--hemoprotein reductase] + O2 = a 14alpha-hydroxymethyl steroid + oxidized [NADPH--hemoprotein reductase] + H2O + H(+). The enzyme catalyses a 14alpha-hydroxymethyl steroid + reduced [NADPH--hemoprotein reductase] + O2 = a 14alpha-formyl steroid + oxidized [NADPH--hemoprotein reductase] + 2 H2O + H(+). It catalyses the reaction a 14alpha-formyl steroid + reduced [NADPH--hemoprotein reductase] + O2 = a Delta(14) steroid + formate + oxidized [NADPH--hemoprotein reductase] + H2O + 2 H(+). The catalysed reaction is lanosterol + reduced [NADPH--hemoprotein reductase] + O2 = 32-hydroxylanosterol + oxidized [NADPH--hemoprotein reductase] + H2O + H(+). It carries out the reaction 32-hydroxylanosterol + reduced [NADPH--hemoprotein reductase] + O2 = 32-oxolanosterol + oxidized [NADPH--hemoprotein reductase] + 2 H2O + H(+). The enzyme catalyses 32-oxolanosterol + reduced [NADPH--hemoprotein reductase] + O2 = 4,4-dimethyl-5alpha-cholesta-8,14,24-trien-3beta-ol + formate + oxidized [NADPH--hemoprotein reductase] + H2O + 2 H(+). It catalyses the reaction 24,25-dihydrolanosterol + reduced [NADPH--hemoprotein reductase] + O2 = 32-hydroxy-24,25-dihydrolanosterol + oxidized [NADPH--hemoprotein reductase] + H2O + H(+). The catalysed reaction is 32-hydroxy-24,25-dihydrolanosterol + reduced [NADPH--hemoprotein reductase] + O2 = 32-oxo-24,25-dihydrolanosterol + oxidized [NADPH--hemoprotein reductase] + 2 H2O + H(+). It carries out the reaction 32-oxo-24,25-dihydrolanosterol + reduced [NADPH--hemoprotein reductase] + O2 = 4,4-dimethyl-8,14-cholestadien-3beta-ol + formate + oxidized [NADPH--hemoprotein reductase] + H2O + 2 H(+). It participates in steroid biosynthesis; zymosterol biosynthesis; zymosterol from lanosterol: step 1/6. With respect to regulation, inhibited by azalanstat. Inhibited by azole antifungal agents ketoconazole, itraconazole and fluconazole. Sterol 14alpha-demethylase that plays a critical role in the cholesterol biosynthesis pathway, being cholesterol the major sterol component in mammalian membranes as well as a precursor for bile acid and steroid hormone synthesis. Cytochrome P450 monooxygenase that catalyzes the three-step oxidative removal of the 14alpha-methyl group (C-32) of sterols such as lanosterol (lanosta-8,24-dien-3beta-ol) and 24,25-dihydrolanosterol (DHL) in the form of formate, and converts the sterols to 4,4-dimethyl-5alpha-cholesta-8,14,24-trien-3beta-ol and 4,4-dimethyl-8,14-cholestadien-3beta-ol, respectively, which are intermediates of cholesterol biosynthesis. Can also demethylate substrates not intrinsic to mammals, such as eburicol (24-methylene-24,25-dihydrolanosterol), but at a lower rate than DHL. The chain is Lanosterol 14-alpha demethylase from Homo sapiens (Human).